The primary structure comprises 152 residues: Protein SprT-like (152 aa).

Positions 7 to 148 (QRLVEEVSLQ…GKCKGKLILI (142 aa)) constitute a SprT-like domain. His67 provides a ligand contact to Zn(2+). Glu68 is a catalytic residue. Position 71 (His71) interacts with Zn(2+).

This sequence belongs to the SprT family. Zn(2+) serves as cofactor.

The protein resides in the cytoplasm. The sequence is that of Protein SprT-like from Bacillus cereus (strain ATCC 10987 / NRS 248).